Reading from the N-terminus, the 375-residue chain is Dual-specificity RNA methyltransferase RlmN (375 aa).

Catalysis depends on Glu94, which acts as the Proton acceptor. In terms of domain architecture, Radical SAM core spans 100-339; it reads EEDRATLCVS…VTVRKTRGDD (240 aa). An intrachain disulfide couples Cys107 to Cys344. 3 residues coordinate [4Fe-4S] cluster: Cys114, Cys118, and Cys121. Residues 168 to 169, Ser200, 222 to 224, and Asn301 contribute to the S-adenosyl-L-methionine site; these read GE and SLH. The active-site S-methylcysteine intermediate is Cys344.

This sequence belongs to the radical SAM superfamily. RlmN family. [4Fe-4S] cluster serves as cofactor.

The protein resides in the cytoplasm. It carries out the reaction adenosine(2503) in 23S rRNA + 2 reduced [2Fe-2S]-[ferredoxin] + 2 S-adenosyl-L-methionine = 2-methyladenosine(2503) in 23S rRNA + 5'-deoxyadenosine + L-methionine + 2 oxidized [2Fe-2S]-[ferredoxin] + S-adenosyl-L-homocysteine. It catalyses the reaction adenosine(37) in tRNA + 2 reduced [2Fe-2S]-[ferredoxin] + 2 S-adenosyl-L-methionine = 2-methyladenosine(37) in tRNA + 5'-deoxyadenosine + L-methionine + 2 oxidized [2Fe-2S]-[ferredoxin] + S-adenosyl-L-homocysteine. Its function is as follows. Specifically methylates position 2 of adenine 2503 in 23S rRNA and position 2 of adenine 37 in tRNAs. m2A2503 modification seems to play a crucial role in the proofreading step occurring at the peptidyl transferase center and thus would serve to optimize ribosomal fidelity. The polypeptide is Dual-specificity RNA methyltransferase RlmN (Vibrio parahaemolyticus serotype O3:K6 (strain RIMD 2210633)).